The following is a 214-amino-acid chain: Melanoregulin (214 aa).

The short motif at 162–172 (LSERYLLVVDR) is the Cholesterol-binding sequence motif element. Ser-213 carries the phosphoserine modification.

Belongs to the melanoregulin family. In terms of assembly, identified in a complex with RILP and DCTN1; interacts directly with RILP, but does not interact directly with DCTN1. Interacts with PRPH2. Palmitoylated. Palmitoylation is required to maintain the protein at the melanosome membrane. Detected in melanocytes. Expressed in retina, in retinal pigment epithelium (at protein level). Widely expressed with higher expression in skin, heart, liver, testis and thymus. Detected in retina, in retinal pigment epithelium cells.

It localises to the apical cell membrane. The protein resides in the melanosome membrane. Its subcellular location is the lysosome membrane. It is found in the cytoplasmic vesicle membrane. Functionally, probably functions as a cargo-recognition protein that couples cytoplasmic vesicles to the transport machinery. Plays a role in hair pigmentation, a process that involves shedding of melanosome-containing vesicles from melanocytes, followed by phagocytosis of the melanosome-containing vesicles by keratinocytes. Functions on melanosomes as receptor for RILP and the complex formed by RILP and DCTN1, and thereby contributes to retrograde melanosome transport from the cell periphery to the center. Overexpression causes accumulation of late endosomes and/or lysosomes at the microtubule organising center (MTOC) at the center of the cell. Probably binds cholesterol and requires the presence of cholesterol in membranes to function in microtubule-mediated retrograde organelle transport. Binds phosphatidylinositol 3-phosphate, phosphatidylinositol 4-phosphate, phosphatidylinositol 5-phosphate and phosphatidylinositol 3,5-bisphosphate, but not phosphatidylinositol 3,4-bisphosphate or phosphatidylinositol 4,5-bisphosphate. Required for normal phagosome clearing and normal activation of lysosomal enzymes in lysosomes from retinal pigment epithelium cells. Required for normal degradation of the lipofuscin component N-retinylidene-N-retinylethanolamine (A2E) in the eye. May function in membrane fusion and regulate the biogenesis of disk membranes of photoreceptor rod cells. The protein is Melanoregulin (Mreg) of Mus musculus (Mouse).